The sequence spans 87 residues: Small ribosomal subunit protein bS20 (87 aa).

The segment at M1–M27 is disordered.

It belongs to the bacterial ribosomal protein bS20 family.

Functionally, binds directly to 16S ribosomal RNA. This is Small ribosomal subunit protein bS20 from Aeromonas hydrophila subsp. hydrophila (strain ATCC 7966 / DSM 30187 / BCRC 13018 / CCUG 14551 / JCM 1027 / KCTC 2358 / NCIMB 9240 / NCTC 8049).